The chain runs to 380 residues: Cytochrome b (380 aa).

4 consecutive transmembrane segments (helical) span residues Phe-34–Ala-54, Trp-78–Ile-99, Trp-114–Leu-134, and Phe-179–Thr-199. Residues His-84 and His-98 each contribute to the heme b site. Residues His-183 and His-197 each contribute to the heme b site. His-202 contributes to the a ubiquinone binding site. 4 helical membrane-spanning segments follow: residues Leu-227–Ser-247, Leu-289–His-309, Phe-321–Ser-341, and Phe-348–Pro-368.

The protein belongs to the cytochrome b family. In terms of assembly, the cytochrome bc1 complex contains 11 subunits: 3 respiratory subunits (MT-CYB, CYC1 and UQCRFS1), 2 core proteins (UQCRC1 and UQCRC2) and 6 low-molecular weight proteins (UQCRH/QCR6, UQCRB/QCR7, UQCRQ/QCR8, UQCR10/QCR9, UQCR11/QCR10 and a cleavage product of UQCRFS1). This cytochrome bc1 complex then forms a dimer. Requires heme b as cofactor.

The protein resides in the mitochondrion inner membrane. In terms of biological role, component of the ubiquinol-cytochrome c reductase complex (complex III or cytochrome b-c1 complex) that is part of the mitochondrial respiratory chain. The b-c1 complex mediates electron transfer from ubiquinol to cytochrome c. Contributes to the generation of a proton gradient across the mitochondrial membrane that is then used for ATP synthesis. The sequence is that of Cytochrome b (MT-CYB) from Bugeranus carunculatus (Wattled crane).